The chain runs to 594 residues: E3 ubiquitin-protein ligase TRAF7 (594 aa).

The tract at residues 1–33 is disordered; that stretch reads MPPINTPRRSDSAISVRSLHSESSMSLRSTFSL. Serine 12 and serine 15 each carry phosphoserine. Residues 15 to 29 show a composition bias toward low complexity; sequence SVRSLHSESSMSLRS. The RING-type zinc finger occupies 55-89; it reads CQLCCSVFKDPVITTCGHTFCRRCALKSEKCPVDN. A TRAF-type zinc finger spans residues 146-216; the sequence is HESSCDYRPV…RFEGLKEFLQ (71 aa). 7 WD repeats span residues 318-357, 361-398, 401-437, 439-478, 481-518, 521-562, and 565-593; these read GHQG…KCQK, GHDG…KVNT, AHDN…LKLK, ELTG…CIHV, TSGG…QVRT, GHVG…CTQT, and RHQG…KVWT.

The protein belongs to the WD repeat TRAF7 family. As to quaternary structure, homodimer. Interacts with MAP3K3 and promotes the kinase activity of this enzyme. In terms of processing, phosphorylated by MAP3K3. Ubiquitinates itself upon phosphorylation. Ubiquitously expressed. Expression is relatively high in heart, liver, kidney, testis, prostate, thyroid, and salivary gland.

The protein localises to the cytoplasmic vesicle. The protein resides in the cytoplasm. It localises to the nucleus. It carries out the reaction S-ubiquitinyl-[E2 ubiquitin-conjugating enzyme]-L-cysteine + [acceptor protein]-L-lysine = [E2 ubiquitin-conjugating enzyme]-L-cysteine + N(6)-ubiquitinyl-[acceptor protein]-L-lysine.. It participates in protein modification; protein ubiquitination. Its function is as follows. E3 ubiquitin and SUMO-protein ligase that plays a role in different biological processes such as innate immunity, inflammation or apoptosis. Potentiates MAP3K3-mediated activation of the NF-kappa-B, JUN/AP1 and DDIT3 transcriptional regulators. Negatively regulates MYB transcriptional activity by sequestering it to the cytosol via SUMOylation. Plays a role in the phosphorylation of MAPK1 and/or MAPK3, probably via its interaction with MAP3K3. Negatively regulates RLR-mediated innate immunity by promoting 'Lys-48'-linked ubiquitination of TBK1 through its RING domain to inhibit the cellular antiviral response. Promotes 'Lys-29'-linked polyubiquitination of NEMO/IKBKG and RELA leading to targeting these two proteins to lysosomal degradative pathways, reducing the transcriptional activity of NF-kappa-B. In Mus musculus (Mouse), this protein is E3 ubiquitin-protein ligase TRAF7.